Consider the following 294-residue polypeptide: ATP synthase gamma chain (294 aa).

This sequence belongs to the ATPase gamma chain family. In terms of assembly, F-type ATPases have 2 components, CF(1) - the catalytic core - and CF(0) - the membrane proton channel. CF(1) has five subunits: alpha(3), beta(3), gamma(1), delta(1), epsilon(1). CF(0) has three main subunits: a, b and c.

It is found in the cell membrane. Produces ATP from ADP in the presence of a proton gradient across the membrane. The gamma chain is believed to be important in regulating ATPase activity and the flow of protons through the CF(0) complex. This chain is ATP synthase gamma chain, found in Ruminiclostridium cellulolyticum (strain ATCC 35319 / DSM 5812 / JCM 6584 / H10) (Clostridium cellulolyticum).